The sequence spans 300 residues: MDLVEEILRLKEERNAIILAHNYQLPEVQDIADFIGDSLELARRATRVDADVIVFAGVDFMAETAKILNPDKVVLIPSREATCAMANMLKVEHILEAKRKYPNAPVVLYVNSTAEAKAYADVTVTSANAVEVVKKLDSDVVIFGPDKNLAHYVAKMTGKKIIPVPSKGHCYVHQKFTLDDVERAKKLHPNAKLMIHPECIPEVQEKADIIASTGGMIKRACEWDEWVVFTEREMVYRLRKLYPQKKFYPAREDAFCIGMKAITLKNIYESLKDMKYKVEVPEEIARKARKAIERMLEMSK.

Iminosuccinate is bound by residues histidine 21 and serine 38. Cysteine 83 is a binding site for [4Fe-4S] cluster. Residues 109-111 (YVN) and serine 126 contribute to the iminosuccinate site. Residue cysteine 170 participates in [4Fe-4S] cluster binding. Iminosuccinate-binding positions include 196–198 (HPE) and threonine 213. Cysteine 256 contributes to the [4Fe-4S] cluster binding site.

The protein belongs to the quinolinate synthase family. Type 2 subfamily. As to quaternary structure, monomer. Homodimer. Requires [4Fe-4S] cluster as cofactor.

It localises to the cytoplasm. The catalysed reaction is iminosuccinate + dihydroxyacetone phosphate = quinolinate + phosphate + 2 H2O + H(+). Its pathway is cofactor biosynthesis; NAD(+) biosynthesis; quinolinate from iminoaspartate: step 1/1. Functionally, catalyzes the condensation of iminoaspartate with dihydroxyacetone phosphate to form quinolinate. The chain is Quinolinate synthase from Pyrococcus horikoshii (strain ATCC 700860 / DSM 12428 / JCM 9974 / NBRC 100139 / OT-3).